Consider the following 65-residue polypeptide: Large ribosomal subunit protein bL35 (65 aa).

The protein belongs to the bacterial ribosomal protein bL35 family.

The sequence is that of Large ribosomal subunit protein bL35 from Proteus mirabilis (strain HI4320).